The following is a 200-amino-acid chain: Large ribosomal subunit protein uL4 (200 aa).

The disordered stretch occupies residues 42 to 65; sequence TRAQKTRSEVSGGGAKPWRQKGTG.

It belongs to the universal ribosomal protein uL4 family. In terms of assembly, part of the 50S ribosomal subunit.

In terms of biological role, one of the primary rRNA binding proteins, this protein initially binds near the 5'-end of the 23S rRNA. It is important during the early stages of 50S assembly. It makes multiple contacts with different domains of the 23S rRNA in the assembled 50S subunit and ribosome. Functionally, forms part of the polypeptide exit tunnel. This chain is Large ribosomal subunit protein uL4, found in Vibrio cholerae serotype O1 (strain ATCC 39541 / Classical Ogawa 395 / O395).